A 70-amino-acid polypeptide reads, in one-letter code: uncharacterized protein (70 aa).

The protein to M.pneumoniae MPN377.

This is an uncharacterized protein from Ureaplasma parvum serovar 3 (strain ATCC 700970).